The chain runs to 461 residues: Armadillo repeat-containing X-linked protein 1 (461 aa).

The Mitochondrial intermembrane segment spans residues 1–6; the sequence is MGRTRE. 2 mitochondrion outer membrane (MOM)-targeting sequence regions span residues 1 to 6 and 26 to 36; these read MGRTRE and RLTWGKDENEK. Residues 7–29 form a helical; Signal-anchor membrane-spanning segment; the sequence is AGCVAAGMVIGAGACYCVYRLTW. Residues 30–461 lie on the Cytoplasmic side of the membrane; the sequence is GKDENEKLWD…VKVLKVLTKL (432 aa). Disordered stretches follow at residues 34–110 and 148–192; these read NEKL…HSEG and SSLP…PATA. Acidic residues predominate over residues 38–51; the sequence is WDDEDEEEEEEEES. Basic and acidic residues predominate over residues 96–110; sequence PDVKKEVYPESHSEG. Residues 167-185 are compositionally biased toward basic residues; the sequence is SRARNRTSGKVKRKNRSKS. ARM repeat units follow at residues 203 to 243, 245 to 284, 366 to 406, and 423 to 461; these read PYKI…NNAA, SFNQ…NLSV, PAMT…NIND, and SSLF…LTKL.

This sequence belongs to the eutherian X-chromosome-specific Armcx family. As to quaternary structure, interacts with MIRO1.

The protein localises to the mitochondrion. It localises to the mitochondrion outer membrane. Functionally, regulates mitochondrial transport during axon regeneration. Increases the proportion of motile mitochondria by recruiting stationary mitochondria into the motile pool. Enhances mitochondria movement and neurite growth in both adult axons and embryonic neurons. Promotes neuronal survival and axon regeneration after nerve injury. May link mitochondria to the Trak1-kinesin motor complex via its interaction with MIRO1. The sequence is that of Armadillo repeat-containing X-linked protein 1 (Armcx1) from Rattus norvegicus (Rat).